The following is a 179-amino-acid chain: Peptide deformylase (179 aa).

Residues C102 and H144 each coordinate Fe cation. E145 is a catalytic residue. H148 contacts Fe cation.

Belongs to the polypeptide deformylase family. It depends on Fe(2+) as a cofactor.

The enzyme catalyses N-terminal N-formyl-L-methionyl-[peptide] + H2O = N-terminal L-methionyl-[peptide] + formate. In terms of biological role, removes the formyl group from the N-terminal Met of newly synthesized proteins. Requires at least a dipeptide for an efficient rate of reaction. N-terminal L-methionine is a prerequisite for activity but the enzyme has broad specificity at other positions. In Wolbachia sp. subsp. Brugia malayi (strain TRS), this protein is Peptide deformylase.